The sequence spans 92 residues: MSLIGLDLFDFVKGIVLLALTSGATYAIGKQFFSSNYCAIARIIQALLLFASSFLFDSAGALILGVIVLIIGVGNYLAETNSKFAFLDPNLA.

3 consecutive transmembrane segments (helical) span residues 11–28 (FVKG…TYAI), 32–52 (FFSS…LFAS), and 54–74 (FLFD…IGVG).

Its subcellular location is the host membrane. This is Putative transmembrane protein ORF92 from Acidianus convivator (ABV).